The primary structure comprises 423 residues: uncharacterized protein (423 aa).

Belongs to the asfivirus E423R family.

The protein resides in the virion. This is an uncharacterized protein from African swine fever virus (isolate Tick/Malawi/Lil 20-1/1983) (ASFV).